Reading from the N-terminus, the 296-residue chain is Sulfotransferase 1B1 (296 aa).

Residue 48-53 coordinates 3'-phosphoadenylyl sulfate; it reads KSGTTW. 107 to 109 is a binding site for substrate; that stretch reads KTH. Histidine 109 acts as the Proton acceptor in catalysis. 3'-phosphoadenylyl sulfate is bound by residues arginine 131, serine 139, tyrosine 194, 228–233, and 258–260; these read TSFEMM and RKG.

This sequence belongs to the sulfotransferase 1 family. In terms of tissue distribution, expressed highly in the colon, kidney and small intestine of male and female dogs. Highly expressed in the jejunum and ileum of the male dog than the female dog, which displayed more expression in duodenum (at protein level).

It localises to the cytoplasm. The catalysed reaction is a phenol + 3'-phosphoadenylyl sulfate = an aryl sulfate + adenosine 3',5'-bisphosphate + H(+). The enzyme catalyses 3,3',5-triiodo-L-thyronine + 3'-phosphoadenylyl sulfate = 3,3',5-triiodo-L-thyronine sulfate + adenosine 3',5'-bisphosphate + H(+). It catalyses the reaction 3,3',5'-triiodo-L-thyronine + 3'-phosphoadenylyl sulfate = 3,3',5'-triiodo-L-thyronine sulfate + adenosine 3',5'-bisphosphate + H(+). It carries out the reaction 3,3'-diiodo-L-thyronine + 3'-phosphoadenylyl sulfate = 3,3'-diiodo-L-thyronine sulfate + adenosine 3',5'-bisphosphate + H(+). The catalysed reaction is 4-ethylphenol + 3'-phosphoadenylyl sulfate = 4-ethylphenyl sulfate + adenosine 3',5'-bisphosphate + H(+). Its function is as follows. Sulfotransferase that utilizes 3'-phospho-5'-adenylyl sulfate (PAPS) as sulfonate donor to catalyze the sulfate conjugation of dopamine, small phenols such as 1-naphthol and p-nitrophenol and thyroid hormones, including 3,3'-diiodothyronine, triidothyronine (T3) and reverse triiodothyronine (rT3). May play a role in gut microbiota-host metabolic interaction. O-sulfonates 4-ethylphenol (4-EP), a dietary tyrosine-derived metabolite produced by gut bacteria. The product 4-EPS crosses the blood-brain barrier and may negatively regulate oligodendrocyte maturation and myelination, affecting the functional connectivity of different brain regions associated with the limbic system. This chain is Sulfotransferase 1B1 (SULT1B1), found in Canis lupus familiaris (Dog).